A 264-amino-acid polypeptide reads, in one-letter code: MKQYLDFMRHVYEHGTDKADRTGTGTRSVFGYQMRFDLRAGFPVVTTKKLHLKSIIYELLWFLQGSTNVRWLQEHGVTIWDEWADENGELGPVYGSQWRSWPTPDGRHIDQITDLVAQIRANPDSRRLIVSAWNVADIPRMKLPPCHAFFQFYVADGRLSCQLYQRSADIFLGVPFNIASYALLTHMMAQQTGLEVGDFVWTGGDCHLYNNHFEQVQTQLAREPLALPQLKILRKPDSIFDYRYEDFELAGYQSHAAIKAPVAV.

DUMP is bound at residue Arg-21. His-51 is a (6R)-5,10-methylene-5,6,7,8-tetrahydrofolate binding site. Residue 126–127 participates in dUMP binding; that stretch reads RR. Cys-146 functions as the Nucleophile in the catalytic mechanism. Residues 166 to 169, Asn-177, and 207 to 209 each bind dUMP; these read RSAD and HLY. Asp-169 serves as a coordination point for (6R)-5,10-methylene-5,6,7,8-tetrahydrofolate. Ala-263 serves as a coordination point for (6R)-5,10-methylene-5,6,7,8-tetrahydrofolate.

Belongs to the thymidylate synthase family. Bacterial-type ThyA subfamily. Homodimer.

The protein localises to the cytoplasm. The catalysed reaction is dUMP + (6R)-5,10-methylene-5,6,7,8-tetrahydrofolate = 7,8-dihydrofolate + dTMP. It functions in the pathway pyrimidine metabolism; dTTP biosynthesis. Functionally, catalyzes the reductive methylation of 2'-deoxyuridine-5'-monophosphate (dUMP) to 2'-deoxythymidine-5'-monophosphate (dTMP) while utilizing 5,10-methylenetetrahydrofolate (mTHF) as the methyl donor and reductant in the reaction, yielding dihydrofolate (DHF) as a by-product. This enzymatic reaction provides an intracellular de novo source of dTMP, an essential precursor for DNA biosynthesis. The sequence is that of Thymidylate synthase from Cupriavidus necator (strain ATCC 17699 / DSM 428 / KCTC 22496 / NCIMB 10442 / H16 / Stanier 337) (Ralstonia eutropha).